A 163-amino-acid chain; its full sequence is Ribonuclease H (163 aa).

In terms of domain architecture, RNase H type-1 spans 1–142 (MRKQVAIFTD…CDELARTAAC (142 aa)). The Mg(2+) site is built by Asp10, Glu48, Asp70, and Asp134.

This sequence belongs to the RNase H family. Monomer. Mg(2+) is required as a cofactor.

Its subcellular location is the cytoplasm. The catalysed reaction is Endonucleolytic cleavage to 5'-phosphomonoester.. Functionally, endonuclease that specifically degrades the RNA of RNA-DNA hybrids. This chain is Ribonuclease H, found in Sodalis glossinidius (strain morsitans).